Here is a 432-residue protein sequence, read N- to C-terminus: Adenylosuccinate synthetase (432 aa).

Residues 12–18 (GDEGKGK) and 40–42 (GHT) each bind GTP. Residue aspartate 13 is the Proton acceptor of the active site. Residues aspartate 13 and glycine 40 each coordinate Mg(2+). IMP is bound by residues 13–16 (DEGK), 38–41 (NAGH), threonine 130, arginine 144, glutamine 225, threonine 240, and arginine 304. Histidine 41 functions as the Proton donor in the catalytic mechanism. 300 to 306 (ATTGRPR) contributes to the substrate binding site. GTP-binding positions include arginine 306, 332 to 334 (KLD), and 414 to 416 (SVG).

The protein belongs to the adenylosuccinate synthetase family. In terms of assembly, homodimer. The cofactor is Mg(2+).

It is found in the cytoplasm. The catalysed reaction is IMP + L-aspartate + GTP = N(6)-(1,2-dicarboxyethyl)-AMP + GDP + phosphate + 2 H(+). It functions in the pathway purine metabolism; AMP biosynthesis via de novo pathway; AMP from IMP: step 1/2. Functionally, plays an important role in the de novo pathway of purine nucleotide biosynthesis. Catalyzes the first committed step in the biosynthesis of AMP from IMP. This Anaeromyxobacter sp. (strain K) protein is Adenylosuccinate synthetase.